We begin with the raw amino-acid sequence, 511 residues long: Vesicular acetylcholine transporter (511 aa).

The Cytoplasmic portion of the chain corresponds to 1 to 36; the sequence is MAVGQAKAAMGKISSAIGERSKRISGAMNEPRRKRK. Residues 37 to 57 traverse the membrane as a helical segment; it reads ILLVIVCIAMLLDNMLYMVIV. Topologically, residues 58-108 are lumenal, vesicle; sequence PIIPNYLETIRTYKLVYITTPSNGTNGSLLNSTQRAVLERNPNANEDIQIG. N80, N83, and N88 each carry an N-linked (GlcNAc...) asparagine glycan. Residues 109–129 traverse the membrane as a helical segment; the sequence is VLFASKAILQLLSNPFTGTFI. Over 130-135 the chain is Cytoplasmic; the sequence is DRVGYD. The helical transmembrane segment at 136–156 threads the bilayer; the sequence is IPLLIGLTIMFFSTITFAFGE. Residues 157-165 lie on the Lumenal, vesicle side of the membrane; that stretch reads SYAILFAAR. A helical transmembrane segment spans residues 166-186; it reads SLQGLGSAFADTSGIAMIADK. The Cytoplasmic segment spans residues 187–197; that stretch reads YTEESERTQAL. Residues 198–218 form a helical membrane-spanning segment; that stretch reads GIALAFISFGSLVAPPFGGVL. Residues 219–225 lie on the Lumenal, vesicle side of the membrane; it reads YQFAGKW. The chain crosses the membrane as a helical span at residues 226–246; it reads VPFLVLSFVCLLDGILLLMVV. Residues 247 to 267 lie on the Cytoplasmic side of the membrane; the sequence is TPFASRTRVNTLQGTPIYKLM. Residues 268–288 traverse the membrane as a helical segment; it reads IDPYIAVVAGALTTCNIPLAF. The Lumenal, vesicle segment spans residues 289-306; sequence LEPTISNWMKKTMNASEW. N302 carries N-linked (GlcNAc...) asparagine glycosylation. Residues 307 to 327 form a helical membrane-spanning segment; it reads QMGITWLPAFFPHILGVYITV. At 328-337 the chain is on the cytoplasmic side; the sequence is KLAAKYPNYQ. The chain crosses the membrane as a helical span at residues 338-358; the sequence is WLYGAVGLVIIGASSCTIPAC. At 359 to 363 the chain is on the lumenal, vesicle side; it reads RNFEE. Residues 364-384 form a helical membrane-spanning segment; the sequence is LIIPLCALCFGIALVDTALLP. Over 385-400 the chain is Cytoplasmic; it reads TLAFLVDIRYVSVYGS. A helical transmembrane segment spans residues 401–421; it reads VYAIADISYSVAYALGPIMAG. At 422–428 the chain is on the lumenal, vesicle side; the sequence is QIVHDLG. The chain crosses the membrane as a helical span at residues 429–449; the sequence is FVQLNLGMGLVNILYAPGLLF. Topologically, residues 450-511 are cytoplasmic; the sequence is LRNVCQMKPS…VLSDQEGYSE (62 aa). The disordered stretch occupies residues 485 to 511; sequence EAKEPHGTSSGNHSVHAVLSDQEGYSE.

The protein belongs to the major facilitator superfamily. Vesicular transporter family. In terms of tissue distribution, high expression in the electric lobe of the brain.

It localises to the membrane. Functionally, involved in acetylcholine transport into synaptic vesicles. This is Vesicular acetylcholine transporter from Torpedo marmorata (Marbled electric ray).